The sequence spans 704 residues: Rabphilin-3A (704 aa).

Positions 1–12 (MTDTVFSSSSSR) are enriched in polar residues. The disordered stretch occupies residues 1-52 (MTDTVFSSSSSRWMCPSDRPLQSNDKEQLQTGWSVHPSGQPDRQRKQEELTD). One can recognise a RabBD domain in the interval 44 to 161 (QRKQEELTDE…KRSGAWFFKG (118 aa)). An FYVE-type zinc finger spans residues 92-149 (GDGVNRCILCGEQLGMLGSACVVCEDCKKNVCTKCGVETSNNRPHPVWLCKICIEQRE). Zn(2+) contacts are provided by Cys98, Cys101, Cys115, Cys118, Cys123, Cys126, Cys141, and Cys144. The tract at residues 167 to 398 (LPQPMPIKKN…EEEANSYDSD (232 aa)) is disordered. Residues 205–214 (TRGDTEDRRG) show a composition bias toward basic and acidic residues. Arg229 is subject to Omega-N-methylarginine. Phosphoserine is present on Ser277. Positions 279-290 (QASRPAPASMQS) are enriched in low complexity. Over residues 291-310 (PAPPQPGQPGPPGGSRPSPG) the composition is skewed to pro residues. Positions 366-380 (QASAAAPQPVVASAR) are enriched in low complexity. The span at 385–398 (PEEDEEEANSYDSD) shows a compositional bias: acidic residues. Positions 402–524 (TLGALEFSLL…KPNQRKNFNI (123 aa)) constitute a C2 1 domain. The Ca(2+) site is built by Met432, Asp433, Asp439, Asp494, Glu495, Asp496, Glu502, Glu549, Asp591, Asp597, Asp651, Tyr652, Asp653, and Asp659. In terms of domain architecture, C2 2 spans 560-693 (ERGKILVSLM…NKDKKIERWH (134 aa)). Phosphoserine occurs at positions 702 and 703.

As to quaternary structure, interacts with RAB3B, RAB3C, RAB3D, RAB8A, RAB27A and RAB27B. Interacts with RAB3A; this interaction recruits RPH3A to synaptic vesicules. Interacts (via C2B domain) with SNAP25. Interacts with deubiquitinating enzyme CAND1; this interaction results in the deubiquitination of RPH3A. Interacts with GRIN2A and DLG4; this ternary complex regulates NMDA receptor composition at postsynaptic membranes. Interacts with SNCA. Ca(2+) serves as cofactor. In terms of processing, ubiquitinated. Deubiquitinated by CAND1 to prevent its degradation. In terms of tissue distribution, specifically expressed in brain.

Its subcellular location is the cytoplasmic vesicle. The protein localises to the secretory vesicle. It localises to the synaptic vesicle membrane. It is found in the cell projection. The protein resides in the dendritic spine. Its subcellular location is the postsynaptic cell membrane. The protein localises to the membrane. Its function is as follows. Plays an essential role in docking and fusion steps of regulated exocytosis. At the presynaptic level, RPH3A is recruited by RAB3A to the synaptic vesicle membrane in a GTP-dependent manner where it modulates synaptic vesicle trafficking and calcium-triggered neurotransmitter release. In the post-synaptic compartment, forms a ternary complex with GRIN2A and DLG4 and regulates NMDA receptor stability. Also plays a role in the exocytosis of arginine vasopressin hormone. The chain is Rabphilin-3A (RPH3A) from Bos taurus (Bovine).